Here is a 201-residue protein sequence, read N- to C-terminus: Superoxide dismutase [Mn/Fe] (201 aa).

Residues histidine 27, histidine 81, aspartate 162, and histidine 166 each contribute to the Fe(3+) site. Mn(2+) is bound by residues histidine 27, histidine 81, aspartate 162, and histidine 166.

It belongs to the iron/manganese superoxide dismutase family. As to quaternary structure, homodimer. The cofactor is Mn(2+). Fe(3+) serves as cofactor.

The catalysed reaction is 2 superoxide + 2 H(+) = H2O2 + O2. In terms of biological role, destroys superoxide anion radicals which are normally produced within the cells and which are toxic to biological systems. Catalyzes the dismutation of superoxide anion radicals into O2 and H2O2 by successive reduction and oxidation of the transition metal ion at the active site. The protein is Superoxide dismutase [Mn/Fe] (sodA) of Staphylococcus carnosus.